Reading from the N-terminus, the 305-residue chain is Mas-related G-protein coupled receptor member A8 (305 aa).

The Extracellular segment spans residues 1-17 (MDKTILGSIDIETLIRH). A helical membrane pass occupies residues 18–38 (LMIIIFGLVGLTGNAIVFWLL). Over 39 to 46 (GFHLHRNA) the chain is Cytoplasmic. The chain crosses the membrane as a helical span at residues 47–67 (FLVYILNLALADFFYLLCHII). Residues 68 to 85 (NSIMFLLKVPSPNIILDH) lie on the Extracellular side of the membrane. A helical membrane pass occupies residues 86 to 106 (CFYTIMIVLYITGLSMLSAIS). Topologically, residues 107 to 129 (TERCLSVLCPIWYRCHRPEHTST) are cytoplasmic. A helical membrane pass occupies residues 130–150 (AMCAVIWVMSLLISILNGYFC). Residues Asn151 and Asn159 are each glycosylated (N-linked (GlcNAc...) asparagine). The Extracellular portion of the chain corresponds to 151 to 172 (NFSSPKYVNNSVCQASDIFIRT). Residues 173–193 (YPIFLFVLLCLSTLALLARLF) traverse the membrane as a helical segment. Residues 194–207 (SGAGKRKFTRLFVT) lie on the Cytoplasmic side of the membrane. The chain crosses the membrane as a helical span at residues 208 to 228 (IMLAILVFLLCGLPLGFFWFL). Topologically, residues 229 to 243 (SPWIEDRFIVLDYRL) are extracellular. A helical membrane pass occupies residues 244 to 264 (FFASVVLTVVNSCANPIIYFF). Residues 265-305 (VGSFRHRLKQQTLKMFLQRALQDTPETPENMVEMSRSKAEP) are Cytoplasmic-facing.

This sequence belongs to the G-protein coupled receptor 1 family. Mas subfamily. As to expression, expressed in a subset of sensory neurons that includes nociceptors. Expressed in the subclass of non-peptidergic sensory neurons that are IB4(+) and VR1(-).

The protein localises to the cell membrane. In terms of biological role, orphan receptor. May be a receptor for RFamide-family neuropeptides such as NPFF and NPAF, which are analgesic in vivo. May regulate nociceptor function and/or development, including the sensation or modulation of pain. This chain is Mas-related G-protein coupled receptor member A8 (Mrgpra8), found in Mus musculus (Mouse).